Here is a 90-residue protein sequence, read N- to C-terminus: MVLPKDVKWDLIRQFQRHEQDTGSPEVQIAILTERINRLTEHMKKHKKDIHSRRGLIAMVNKRRKLLEYLRETDYAKYLEVVQKLNLKVK.

Belongs to the universal ribosomal protein uS15 family. As to quaternary structure, part of the 30S ribosomal subunit. Forms a bridge to the 50S subunit in the 70S ribosome, contacting the 23S rRNA.

Functionally, one of the primary rRNA binding proteins, it binds directly to 16S rRNA where it helps nucleate assembly of the platform of the 30S subunit by binding and bridging several RNA helices of the 16S rRNA. In terms of biological role, forms an intersubunit bridge (bridge B4) with the 23S rRNA of the 50S subunit in the ribosome. The sequence is that of Small ribosomal subunit protein uS15 from Aquifex aeolicus (strain VF5).